The primary structure comprises 452 residues: UDP-N-acetylmuramoylalanine--D-glutamate ligase (452 aa).

119–125 (GSNGKTT) provides a ligand contact to ATP.

The protein belongs to the MurCDEF family.

It is found in the cytoplasm. The enzyme catalyses UDP-N-acetyl-alpha-D-muramoyl-L-alanine + D-glutamate + ATP = UDP-N-acetyl-alpha-D-muramoyl-L-alanyl-D-glutamate + ADP + phosphate + H(+). It functions in the pathway cell wall biogenesis; peptidoglycan biosynthesis. Functionally, cell wall formation. Catalyzes the addition of glutamate to the nucleotide precursor UDP-N-acetylmuramoyl-L-alanine (UMA). The sequence is that of UDP-N-acetylmuramoylalanine--D-glutamate ligase from Streptococcus pyogenes serotype M2 (strain MGAS10270).